The sequence spans 93 residues: Small ribosomal subunit protein uS17 (93 aa).

Belongs to the universal ribosomal protein uS17 family. In terms of assembly, part of the 30S ribosomal subunit.

Its function is as follows. One of the primary rRNA binding proteins, it binds specifically to the 5'-end of 16S ribosomal RNA. This is Small ribosomal subunit protein uS17 from Rhodococcus erythropolis (strain PR4 / NBRC 100887).